The sequence spans 366 residues: Chorismate synthase (366 aa).

NADP(+) is bound by residues Arg-48 and Arg-54. Residues 125 to 127, 238 to 239, Gly-278, 293 to 297, and Arg-319 contribute to the FMN site; these read RSS, NA, and KPTSS.

The protein belongs to the chorismate synthase family. In terms of assembly, homotetramer. Requires FMNH2 as cofactor.

The catalysed reaction is 5-O-(1-carboxyvinyl)-3-phosphoshikimate = chorismate + phosphate. It functions in the pathway metabolic intermediate biosynthesis; chorismate biosynthesis; chorismate from D-erythrose 4-phosphate and phosphoenolpyruvate: step 7/7. Functionally, catalyzes the anti-1,4-elimination of the C-3 phosphate and the C-6 proR hydrogen from 5-enolpyruvylshikimate-3-phosphate (EPSP) to yield chorismate, which is the branch point compound that serves as the starting substrate for the three terminal pathways of aromatic amino acid biosynthesis. This reaction introduces a second double bond into the aromatic ring system. This is Chorismate synthase from Thiobacillus denitrificans (strain ATCC 25259 / T1).